The primary structure comprises 302 residues: Snake venom metalloprotease inhibitor 02A10 (302 aa).

An N-terminal signal peptide occupies residues 1 to 23; that stretch reads MSVSRLAASGLLLVSLLALALDG. The propeptide occupies 24-47; it reads KPVEKWSPWLWPPRPRPPIPPLQQ. Residues 32-302 are disordered; it reads WLWPPRPRPP…CPKLPPSGGH (271 aa). A compositionally biased stretch (pro residues) spans 33 to 44; the sequence is LWPPRPRPPIPP. Position 48 is a pyrrolidone carboxylic acid (Gln48). Positions 51–58 are excised as a propeptide; that stretch reads LDPPIPQQ. Pyrrolidone carboxylic acid is present on Gln59. Positions 62–69 are excised as a propeptide; the sequence is LDPPIPQQ. Gln70 bears the Pyrrolidone carboxylic acid mark. Positions 73-80 are excised as a propeptide; sequence LDPPIPQQ. Gln81 bears the Pyrrolidone carboxylic acid mark. The propeptide occupies 84 to 91; that stretch reads LNPPIPQQ. Gln92 carries the pyrrolidone carboxylic acid modification. Positions 95-102 are excised as a propeptide; that stretch reads LDPPIPQQ. A Pyrrolidone carboxylic acid modification is found at Gln103. A propeptide spanning residues 106-113 is cleaved from the precursor; the sequence is LNPPIPQQ. A Pyrrolidone carboxylic acid modification is found at Gln114. A propeptide spanning residues 117–124 is cleaved from the precursor; that stretch reads LNPPIPQQ. Gln125 is modified (pyrrolidone carboxylic acid). A propeptide spanning residues 128-135 is cleaved from the precursor; the sequence is LNPPIPQQ. Gln136 is modified (pyrrolidone carboxylic acid). The propeptide occupies 139–146; that stretch reads LNPPIPQQ. Gln147 bears the Pyrrolidone carboxylic acid mark. A propeptide spanning residues 150 to 157 is cleaved from the precursor; that stretch reads LDPPIPQQ. Residue Gln158 is modified to Pyrrolidone carboxylic acid. The propeptide occupies 161–168; it reads LDPPIPQQ. Gln169 is modified (pyrrolidone carboxylic acid). Residues 172–179 constitute a propeptide that is removed on maturation; that stretch reads LDPPIPQQ. The residue at position 180 (Gln180) is a Pyrrolidone carboxylic acid. Residues 183-190 constitute a propeptide that is removed on maturation; sequence LNPPIPQQ. Pyrrolidone carboxylic acid is present on Gln191. Positions 194–201 are excised as a propeptide; sequence LDPPIPQQ. At Gln202 the chain carries Pyrrolidone carboxylic acid. Positions 205 to 212 are excised as a propeptide; that stretch reads LDPPIPQQ. At Gln213 the chain carries Pyrrolidone carboxylic acid. The propeptide occupies 216–223; sequence LNPPIPQQ. Gln224 carries the post-translational modification Pyrrolidone carboxylic acid. A propeptide spanning residues 227 to 273 is cleaved from the precursor; sequence QRPLQPEVPSLMELHQERQKQGRMMHHDEDPGDAAEGPRRQKKEPGK. 2 stretches are compositionally biased toward basic and acidic residues: residues 240–255 and 262–273; these read LHQE…HHDE and EGPRRQKKEPGK. Cys279 and Cys293 are disulfide-bonded. A propeptide spanning residues 294 to 302 is cleaved from the precursor; that stretch reads PKLPPSGGH.

In the C-terminal section; belongs to the natriuretic peptide family. Expressed by the venom gland.

The protein localises to the secreted. PEKW peptides may serve as metalloproteinase inhibitors during glandular storage. Their inhibition may be instantly disengaged, by dilution or physiochemical change, when venom is injected into tissue of the victim. In terms of biological role, exhibits hypotensive and vasodepressor activity. Acts by activating natriuretic receptors (NPR1 and/or NPR2 and/or NPR3). In Cerastes cerastes (Horned desert viper), this protein is Snake venom metalloprotease inhibitor 02A10 (Svmpi-Cce12).